Consider the following 48-residue polypeptide: Large ribosomal subunit protein bL32 (48 aa).

The tract at residues 28-48 (VKDKDGSWKMPHRINKTTGEY) is disordered.

It belongs to the bacterial ribosomal protein bL32 family.

The polypeptide is Large ribosomal subunit protein bL32 (Campylobacter concisus (strain 13826)).